A 722-amino-acid polypeptide reads, in one-letter code: Ribosomal RNA large subunit methyltransferase K/L (722 aa).

A THUMP domain is found at 55 to 167 (TGYRACLWSR…GNEGTLYLDL (113 aa)).

Belongs to the methyltransferase superfamily. RlmKL family.

Its subcellular location is the cytoplasm. It catalyses the reaction guanosine(2445) in 23S rRNA + S-adenosyl-L-methionine = N(2)-methylguanosine(2445) in 23S rRNA + S-adenosyl-L-homocysteine + H(+). The catalysed reaction is guanosine(2069) in 23S rRNA + S-adenosyl-L-methionine = N(2)-methylguanosine(2069) in 23S rRNA + S-adenosyl-L-homocysteine + H(+). Specifically methylates the guanine in position 2445 (m2G2445) and the guanine in position 2069 (m7G2069) of 23S rRNA. This is Ribosomal RNA large subunit methyltransferase K/L from Desulfotalea psychrophila (strain LSv54 / DSM 12343).